A 108-amino-acid chain; its full sequence is MVDFMDYNDFQKKLDKEEHGDGITVGAVYTGEFTLYLLFIFGALIIGRVYGKTLMTLFGLAALAFSLSVSPLIFKFKEENSNAINYQLFWLSIFLGAIAFCIYMTTRW.

The next 3 helical transmembrane spans lie at 26–46, 54–74, and 84–104; these read GAVY…ALII, LMTL…PLIF, and INYQ…CIYM.

The protein resides in the cell membrane. This is an uncharacterized protein from Methanocaldococcus jannaschii (strain ATCC 43067 / DSM 2661 / JAL-1 / JCM 10045 / NBRC 100440) (Methanococcus jannaschii).